A 494-amino-acid polypeptide reads, in one-letter code: Probable malate:quinone oxidoreductase 3 (494 aa).

It belongs to the MQO family. The cofactor is FAD.

It catalyses the reaction (S)-malate + a quinone = a quinol + oxaloacetate. Its pathway is carbohydrate metabolism; tricarboxylic acid cycle; oxaloacetate from (S)-malate (quinone route): step 1/1. This is Probable malate:quinone oxidoreductase 3 from Staphylococcus epidermidis (strain ATCC 12228 / FDA PCI 1200).